The primary structure comprises 304 residues: MNEQHAQSDRPPTVRPMDFLLVTGLSGAGLQTAAKVLEDLGWYVADNLPPELISRMVDLSLESDSRLERLAVVIDVRSRLFTGDLGWVLTELESKPVHTRVLYLDASDEVLVRRFEQVRRSHPLSGGGAEGTLSEGIAAERDQLAKVKAAADLVIDTSSLAAHQLRQKIEDAFGDAENRTMQVTVQSFGFKYGLPMDADLVCDVRFLPNPHWIPELRPHTGQSADVRDYVLSQDGAEDYLATYHHLLDLTITGYRREGKRYMTIAVGCTGGKHRSVAMSEALAGRLGKDSGLNVRVVHRDLGRE.

Residue 24–31 (GLSGAGLQ) participates in ATP binding. GTP is bound at residue 75–78 (DVRS).

The protein belongs to the RapZ-like family.

In terms of biological role, displays ATPase and GTPase activities. The sequence is that of Nucleotide-binding protein ROP_69550 from Rhodococcus opacus (strain B4).